Reading from the N-terminus, the 599-residue chain is NADH-quinone oxidoreductase subunit C/D (599 aa).

Positions 1–15 (MTDLTAQELAQPSWQ) are enriched in polar residues. Positions 1 to 21 (MTDLTAQELAQPSWQTRDHQD) are disordered. The tract at residues 1-189 (MTDLTAQELA…DPFELTKQKE (189 aa)) is NADH dehydrogenase I subunit C. The segment at 213-599 (DFMFLNLGPN…IDFVMSDVDR (387 aa)) is NADH dehydrogenase I subunit D.

It in the N-terminal section; belongs to the complex I 30 kDa subunit family. The protein in the C-terminal section; belongs to the complex I 49 kDa subunit family. NDH-1 is composed of 13 different subunits. Subunits NuoB, CD, E, F, and G constitute the peripheral sector of the complex.

The protein resides in the cell inner membrane. The enzyme catalyses a quinone + NADH + 5 H(+)(in) = a quinol + NAD(+) + 4 H(+)(out). NDH-1 shuttles electrons from NADH, via FMN and iron-sulfur (Fe-S) centers, to quinones in the respiratory chain. The immediate electron acceptor for the enzyme in this species is believed to be ubiquinone. Couples the redox reaction to proton translocation (for every two electrons transferred, four hydrogen ions are translocated across the cytoplasmic membrane), and thus conserves the redox energy in a proton gradient. In Erwinia tasmaniensis (strain DSM 17950 / CFBP 7177 / CIP 109463 / NCPPB 4357 / Et1/99), this protein is NADH-quinone oxidoreductase subunit C/D.